The chain runs to 213 residues: Octanoyltransferase (213 aa).

Residues 32–207 (NSTLDEIWLV…NILALLNNPD (176 aa)) form the BPL/LPL catalytic domain. Residues 71 to 78 (RGGQVTYH), 138 to 140 (SLG), and 151 to 153 (GLA) each bind substrate. Catalysis depends on Cys-169, which acts as the Acyl-thioester intermediate.

The protein belongs to the LipB family.

The protein localises to the cytoplasm. The catalysed reaction is octanoyl-[ACP] + L-lysyl-[protein] = N(6)-octanoyl-L-lysyl-[protein] + holo-[ACP] + H(+). It participates in protein modification; protein lipoylation via endogenous pathway; protein N(6)-(lipoyl)lysine from octanoyl-[acyl-carrier-protein]: step 1/2. Catalyzes the transfer of endogenously produced octanoic acid from octanoyl-acyl-carrier-protein onto the lipoyl domains of lipoate-dependent enzymes. Lipoyl-ACP can also act as a substrate although octanoyl-ACP is likely to be the physiological substrate. This Shigella flexneri serotype 5b (strain 8401) protein is Octanoyltransferase.